Consider the following 102-residue polypeptide: Protein RnfH (102 aa).

This sequence belongs to the UPF0125 (RnfH) family.

This chain is Protein RnfH, found in Haemophilus influenzae (strain 86-028NP).